The chain runs to 378 residues: Ret finger protein-like 2 (378 aa).

An RING-type; degenerate zinc finger spans residues 101 to 143 (CPVCSDYLEKPMSLECGCAVCLKCINSLQKEPHGEDLLCCCSS). The B30.2/SPRY domain maps to 168–362 (EPKLKKILQM…DQGVLSICPL (195 aa)).

Seems to be expressed in prostate and less abundantly in adult brain, fetal liver, and fetal kidney.

The chain is Ret finger protein-like 2 (RFPL2) from Homo sapiens (Human).